We begin with the raw amino-acid sequence, 1071 residues long: ATP-dependent helicase/deoxyribonuclease subunit B (1071 aa).

The protein belongs to the helicase family. AddB/RexB type 2 subfamily. In terms of assembly, heterodimer of AddA and RexB. The cofactor is Mg(2+).

Functionally, the heterodimer acts as both an ATP-dependent DNA helicase and an ATP-dependent, dual-direction single-stranded exonuclease. Recognizes the chi site generating a DNA molecule suitable for the initiation of homologous recombination. This subunit has 5' -&gt; 3' nuclease activity but not helicase activity. The protein is ATP-dependent helicase/deoxyribonuclease subunit B of Streptococcus pyogenes serotype M4 (strain MGAS10750).